Consider the following 123-residue polypeptide: Large ribosomal subunit protein uL14 (123 aa).

The protein belongs to the universal ribosomal protein uL14 family. Part of the 50S ribosomal subunit. Forms a cluster with proteins L3 and L19. In the 70S ribosome, L14 and L19 interact and together make contacts with the 16S rRNA in bridges B5 and B8.

Its function is as follows. Binds to 23S rRNA. Forms part of two intersubunit bridges in the 70S ribosome. The polypeptide is Large ribosomal subunit protein uL14 (Photobacterium profundum (strain SS9)).